Consider the following 89-residue polypeptide: Small ribosomal subunit protein bS20 (89 aa).

The tract at residues 1–29 (MTLANIKSAKKRAVQSEKRRQHNASQRSM) is disordered.

It belongs to the bacterial ribosomal protein bS20 family.

Binds directly to 16S ribosomal RNA. This Haemophilus influenzae (strain 86-028NP) protein is Small ribosomal subunit protein bS20.